Reading from the N-terminus, the 346-residue chain is Secreted frizzled-related protein 4 (346 aa).

A signal peptide spans 1 to 18 (MFLSILVALCLWLHLALG). Positions 19–139 (VRGAPCEAVR…VYDRGVCISP (121 aa)) constitute an FZ domain. 5 cysteine pairs are disulfide-bonded: Cys24–Cys85, Cys32–Cys78, Cys69–Cys108, Cys97–Cys136, and Cys101–Cys125. 2 N-linked (GlcNAc...) asparagine glycosylation sites follow: Asn38 and Asn68. Residues Asn116, Asn194, and Asn240 are each glycosylated (N-linked (GlcNAc...) asparagine). An NTR domain is found at 178-307 (CKCKKVKPTL…IQDKKKTAGR (130 aa)). Basic and acidic residues predominate over residues 294-303 (QRRTIQDKKK). Positions 294-346 (QRRTIQDKKKTAGRTSRSNPPKPKGKPPAPKPASPKKNIKTRSAQKKTNPKKV) are disordered. Positions 313-326 (PPKPKGKPPAPKPA) are enriched in pro residues. Residues 330–346 (KNIKTRSAQKKTNPKKV) show a composition bias toward basic residues.

The protein belongs to the secreted frizzled-related protein (sFRP) family.

The protein resides in the secreted. Its function is as follows. Soluble frizzled-related proteins (sFRPS) function as modulators of Wnt signaling through direct interaction with Wnts. They have a role in regulating cell growth and differentiation in specific cell types. SFRP4 plays a role in bone morphogenesis. May also act as a regulator of adult uterine morphology and function. May also increase apoptosis during ovulation possibly through modulation of FZ1/FZ4/WNT4 signaling. Has phosphaturic effects by specifically inhibiting sodium-dependent phosphate uptake. This chain is Secreted frizzled-related protein 4 (SFRP4), found in Macaca mulatta (Rhesus macaque).